Reading from the N-terminus, the 308-residue chain is Ribosomal RNA small subunit methyltransferase H (308 aa).

Residues 36–38, Asp-55, Phe-86, Asp-103, and Gln-110 each bind S-adenosyl-L-methionine; that span reads GGH.

The protein belongs to the methyltransferase superfamily. RsmH family.

The protein resides in the cytoplasm. The catalysed reaction is cytidine(1402) in 16S rRNA + S-adenosyl-L-methionine = N(4)-methylcytidine(1402) in 16S rRNA + S-adenosyl-L-homocysteine + H(+). In terms of biological role, specifically methylates the N4 position of cytidine in position 1402 (C1402) of 16S rRNA. This is Ribosomal RNA small subunit methyltransferase H from Helicobacter pylori (strain P12).